Here is a 170-residue protein sequence, read N- to C-terminus: Class I hydrophobin E (170 aa).

The first 19 residues, 1-19, serve as a signal peptide directing secretion; sequence MQLTTLLTGLISVLSVTTA. 4 disulfide bridges follow: Cys62-Cys126, Cys70-Cys117, Cys71-Cys105, and Cys127-Cys139.

The protein belongs to the fungal hydrophobin family.

It localises to the secreted. The protein localises to the cell wall. Aerial growth, conidiation, and dispersal of filamentous fungi in the environment rely upon a capability of their secreting small amphipathic proteins called hydrophobins (HPBs) with low sequence identity. Class I can self-assemble into an outermost layer of rodlet bundles on aerial cell surfaces, conferring cellular hydrophobicity that supports fungal growth, development and dispersal; whereas Class II form highly ordered films at water-air interfaces through intermolecular interactions but contribute nothing to the rodlet structure. In P.expansum, hydrophobins contribute to germination, tolerance to cold stress and mycotoxins patulin and citrinin production. This chain is Class I hydrophobin E, found in Penicillium expansum (Blue mold rot fungus).